We begin with the raw amino-acid sequence, 288 residues long: RanBP2-type zinc finger protein At1g67325 (288 aa).

Over residues 1 to 11 (MSQVDNRNSSA) the composition is skewed to polar residues. 5 disordered regions span residues 1-24 (MSQV…RRED), 52-77 (PADH…GAYL), 176-198 (MPRP…DNDW), 222-248 (PKPG…WKCD), and 265-288 (NCGA…ENDQ). Residues 15 to 24 (ARTDGGRRED) are compositionally biased toward basic and acidic residues. 3 consecutive RanBP2-type zinc fingers follow at residues 22–53 (REDD…PRPA), 194–225 (RDND…PKPG), and 241–272 (PEGS…DKPG). The segment covering 181-197 (FYPDEKSQKRDSTRDND) has biased composition (basic and acidic residues). Residues 223–241 (KPGSQQGGSSDKISKQNAP) are compositionally biased toward polar residues. Phosphoserine is present on Ser-278.

The protein is RanBP2-type zinc finger protein At1g67325 of Arabidopsis thaliana (Mouse-ear cress).